A 188-amino-acid polypeptide reads, in one-letter code: Adenine phosphoribosyltransferase (188 aa).

It belongs to the purine/pyrimidine phosphoribosyltransferase family. In terms of assembly, homodimer.

The protein localises to the cytoplasm. It carries out the reaction AMP + diphosphate = 5-phospho-alpha-D-ribose 1-diphosphate + adenine. Its pathway is purine metabolism; AMP biosynthesis via salvage pathway; AMP from adenine: step 1/1. Its function is as follows. Catalyzes a salvage reaction resulting in the formation of AMP, that is energically less costly than de novo synthesis. The protein is Adenine phosphoribosyltransferase of Paraburkholderia phytofirmans (strain DSM 17436 / LMG 22146 / PsJN) (Burkholderia phytofirmans).